The sequence spans 415 residues: Tyrosine--tRNA ligase (415 aa).

Tyrosine 34 serves as a coordination point for L-tyrosine. The 'HIGH' region motif lies at 39–48 (PTADSLHLGH). Residues tyrosine 164 and glutamine 168 each contribute to the L-tyrosine site. The short motif at 226–230 (KFGKS) is the 'KMSKS' region element. Lysine 229 lines the ATP pocket. An S4 RNA-binding domain is found at 348-415 (KNVVDFLVDG…KKKYFLGKVK (68 aa)).

It belongs to the class-I aminoacyl-tRNA synthetase family. TyrS type 1 subfamily. In terms of assembly, homodimer.

The protein resides in the cytoplasm. The enzyme catalyses tRNA(Tyr) + L-tyrosine + ATP = L-tyrosyl-tRNA(Tyr) + AMP + diphosphate + H(+). Functionally, catalyzes the attachment of tyrosine to tRNA(Tyr) in a two-step reaction: tyrosine is first activated by ATP to form Tyr-AMP and then transferred to the acceptor end of tRNA(Tyr). This is Tyrosine--tRNA ligase from Leuconostoc mesenteroides subsp. mesenteroides (strain ATCC 8293 / DSM 20343 / BCRC 11652 / CCM 1803 / JCM 6124 / NCDO 523 / NBRC 100496 / NCIMB 8023 / NCTC 12954 / NRRL B-1118 / 37Y).